The sequence spans 350 residues: Beta-ketoacyl-[acyl-carrier-protein] synthase III (350 aa).

Residues Cys-120 and His-256 contribute to the active site. Positions 257 to 261 (QANVR) are ACP-binding. Residue Asn-286 is part of the active site.

This sequence belongs to the thiolase-like superfamily. FabH family. As to quaternary structure, homodimer.

Its subcellular location is the cytoplasm. It carries out the reaction malonyl-[ACP] + acetyl-CoA + H(+) = 3-oxobutanoyl-[ACP] + CO2 + CoA. The protein operates within lipid metabolism; fatty acid biosynthesis. Catalyzes the condensation reaction of fatty acid synthesis by the addition to an acyl acceptor of two carbons from malonyl-ACP. Catalyzes the first condensation reaction which initiates fatty acid synthesis and may therefore play a role in governing the total rate of fatty acid production. Possesses both acetoacetyl-ACP synthase and acetyl transacylase activities. Its substrate specificity determines the biosynthesis of branched-chain and/or straight-chain of fatty acids. The protein is Beta-ketoacyl-[acyl-carrier-protein] synthase III of Deinococcus deserti (strain DSM 17065 / CIP 109153 / LMG 22923 / VCD115).